Reading from the N-terminus, the 347-residue chain is Quinolinate synthase (347 aa).

Residues histidine 47 and serine 68 each contribute to the iminosuccinate site. Cysteine 113 serves as a coordination point for [4Fe-4S] cluster. Iminosuccinate-binding positions include 139-141 and serine 156; that span reads YAN. Cysteine 200 contributes to the [4Fe-4S] cluster binding site. Residues 226-228 and threonine 243 contribute to the iminosuccinate site; that span reads HPE. Cysteine 297 contacts [4Fe-4S] cluster.

The protein belongs to the quinolinate synthase family. Type 1 subfamily. It depends on [4Fe-4S] cluster as a cofactor.

The protein resides in the cytoplasm. The catalysed reaction is iminosuccinate + dihydroxyacetone phosphate = quinolinate + phosphate + 2 H2O + H(+). It participates in cofactor biosynthesis; NAD(+) biosynthesis; quinolinate from iminoaspartate: step 1/1. Its function is as follows. Catalyzes the condensation of iminoaspartate with dihydroxyacetone phosphate to form quinolinate. This chain is Quinolinate synthase, found in Shigella dysenteriae serotype 1 (strain Sd197).